The primary structure comprises 310 residues: MTAQTQELTKAQQYNFNKLQKRIRRNTGQAIADFNMIEDGDRIMVCLSGGKDSFTMLDILMSLQKSAPISFELVAVNLDQKQPGFPEHVLPEYLESLGVEYKIVEEDTYAIVQDKVPEGKTTCALCSRLRRGILYRTAKELGATKIALGHHRDDILETLFLNMFYGGKMKGMPPKLVSDNGEHVVIRPLAYCREKDIIKYSDMRGYPIIPCNLCGSQPNLQRQAVKQMLNDWDKRFPGRIETMFRAMQNVVPSHLADFSLFDFKSIDKNSGVINGGDIGFDKEEIAPQVVEDEDLVMEFDPSLQLNVTNI.

The short motif at serine 48–serine 53 is the PP-loop motif element. Cysteine 123, cysteine 126, and cysteine 214 together coordinate [4Fe-4S] cluster.

It belongs to the TtcA family. Homodimer. Mg(2+) serves as cofactor. It depends on [4Fe-4S] cluster as a cofactor.

The protein resides in the cytoplasm. It carries out the reaction cytidine(32) in tRNA + S-sulfanyl-L-cysteinyl-[cysteine desulfurase] + AH2 + ATP = 2-thiocytidine(32) in tRNA + L-cysteinyl-[cysteine desulfurase] + A + AMP + diphosphate + H(+). The protein operates within tRNA modification. In terms of biological role, catalyzes the ATP-dependent 2-thiolation of cytidine in position 32 of tRNA, to form 2-thiocytidine (s(2)C32). The sulfur atoms are provided by the cysteine/cysteine desulfurase (IscS) system. The protein is tRNA-cytidine(32) 2-sulfurtransferase of Vibrio cholerae serotype O1 (strain ATCC 39315 / El Tor Inaba N16961).